Reading from the N-terminus, the 977-residue chain is Kinesin-like protein KIN-14D (977 aa).

The span at 1-13 shows a compositional bias: low complexity; the sequence is MSSSNNAAAAAAS. The segment at 1-20 is disordered; the sequence is MSSSNNAAAAAASPDPSRRR. Residues 17–118 form the Calponin-homology (CH) domain; it reads SRRREDVVGW…CILALKDRFG (102 aa). Residues 297 to 384 are a coiled coil; the sequence is KAEETQRIED…TKRRIELEEL (88 aa). A Kinesin motor domain is found at 472-800; it reads NIRVYCRIRP…LKFAERVSGV (329 aa). ATP is bound at residue 556–563; it reads GQTGSGKT. Residues 812–847 are a coiled coil; that stretch reads KEGKDVKELMDQLSLLKDTISKKDEEIDRLQLLNSS. The segment at 852–977 is disordered; that stretch reads PTRQADSVLK…RNNSTLKRGP (126 aa). 2 stretches are compositionally biased toward polar residues: residues 861 to 879 and 956 to 977; these read KHSSSSPGITSLGKGTSVG and RKSSTSQATPLARNNSTLKRGP.

Belongs to the TRAFAC class myosin-kinesin ATPase superfamily. Kinesin family. KIN-14 subfamily.

This Oryza sativa subsp. japonica (Rice) protein is Kinesin-like protein KIN-14D.